Here is a 335-residue protein sequence, read N- to C-terminus: MKRIAVLTSGGDAPGMNAAIRAVVRQAISEGMEVFGIYDGYAGMVAGEIHPLDAASVGDIISRGGTFLHSARYPEFAQLEGQLKGIEQLKKHGIEGVVVIGGDGSYHGAMRLTEHGFPAIGLPGTIDNDIVGTDFTIGFDTAVTTAMDAIDKIRDTSSSHRRTFVIEVMGRNAGDIALWAGIATGADEIIIPEAGFKMEDIVASIKAGYECGKKHNIIVLAEGVMSAAEFGQKLKEAGDTSDLRVTELGHIQRGGSPTARDRVLASRMGAHAVKLLKEGIGGVAVGIRNEKMVENPILGTAEEGALFSLTAEGKIVVNNPHKADIELSSLNKSLS.

Glycine 11 is an ATP binding site. 21–25 (RAVVR) contacts ADP. ATP-binding positions include 72–73 (RY) and 102–105 (GDGS). A Mg(2+)-binding site is contributed by aspartate 103. Substrate is bound at residue 125-127 (TID). The active-site Proton acceptor is aspartate 127. Arginine 154 contacts ADP. Residues arginine 162 and 169 to 171 (MGR) contribute to the substrate site. Residues 185–187 (GAD) and 213–215 (KKH) each bind ADP. Substrate-binding positions include glutamate 222, arginine 244, and 250-253 (HIQR).

The protein belongs to the phosphofructokinase type A (PFKA) family. ATP-dependent PFK group I subfamily. Prokaryotic clade 'B1' sub-subfamily. As to quaternary structure, homotetramer. Mg(2+) is required as a cofactor.

The protein resides in the cytoplasm. It carries out the reaction beta-D-fructose 6-phosphate + ATP = beta-D-fructose 1,6-bisphosphate + ADP + H(+). The protein operates within carbohydrate degradation; glycolysis; D-glyceraldehyde 3-phosphate and glycerone phosphate from D-glucose: step 3/4. With respect to regulation, allosterically activated by ADP and other diphosphonucleosides, and allosterically inhibited by phosphoenolpyruvate. Functionally, catalyzes the phosphorylation of D-fructose 6-phosphate to fructose 1,6-bisphosphate by ATP, the first committing step of glycolysis. In Streptococcus pneumoniae serotype 4 (strain ATCC BAA-334 / TIGR4), this protein is ATP-dependent 6-phosphofructokinase.